The following is a 373-amino-acid chain: Cytoplasmic tRNA 2-thiolation protein 1 (373 aa).

Belongs to the TtcA family. CTU1/NCS6/ATPBD3 subfamily.

The protein resides in the cytoplasm. Its pathway is tRNA modification; 5-methoxycarbonylmethyl-2-thiouridine-tRNA biosynthesis. Plays a central role in 2-thiolation of mcm(5)S(2)U at tRNA wobble positions of tRNA(Lys), tRNA(Glu) and tRNA(Gln). Directly binds tRNAs and probably acts by catalyzing adenylation of tRNAs, an intermediate required for 2-thiolation. It is unclear whether it acts as a sulfurtransferase that transfers sulfur from thiocarboxylated URM1 onto the uridine of tRNAs at wobble position. Prior mcm(5) tRNA modification by the elongator complex is required for 2-thiolation. May also be involved in protein urmylation. The chain is Cytoplasmic tRNA 2-thiolation protein 1 from Malassezia globosa (strain ATCC MYA-4612 / CBS 7966) (Dandruff-associated fungus).